We begin with the raw amino-acid sequence, 79 residues long: Protein S100-G (79 aa).

Position 2 is an N-acetylserine (Ser-2). 2 EF-hand domains span residues 13–48 and 45–79; these read IFEK…KGSS and KGSS…KISQ. Gln-26 and Glu-31 together coordinate Ca(2+). Ser-47 bears the Phosphoserine mark. 5 residues coordinate Ca(2+): Asp-58, Asn-60, Asp-62, Glu-64, and Glu-69.

The protein belongs to the S-100 family.

The polypeptide is Protein S100-G (S100G) (Equus caballus (Horse)).